A 151-amino-acid polypeptide reads, in one-letter code: uncharacterized protein (151 aa).

The next 3 membrane-spanning stretches (helical) occupy residues 14-34 (GAALLDYIIVSVPLLLIYWLI), 45-65 (ISLVVLLYSILLPMFWRGYLI), and 91-111 (VIVAGLVYCITFGLGLIASLI).

Its subcellular location is the cell membrane. This is an uncharacterized protein from Bacillus subtilis (strain 168).